Consider the following 504-residue polypeptide: Peptidyl-prolyl cis-trans isomerase-like 4 (504 aa).

Residues 1–169 (MSVMLETSLG…QNIRIRHVEI (169 aa)) enclose the PPIase cyclophilin-type domain. The region spanning 246-324 (NILFVCKLNP…RRIWVDFSQS (79 aa)) is the RRM domain. Residues 330–339 (RSMLSSSNPT) are compositionally biased toward polar residues. The disordered stretch occupies residues 330–504 (RSMLSSSNPT…RERDDRDRRR (175 aa)). Positions 340-354 (GRGGRGGRGGRGGNY) are enriched in gly residues. Composition is skewed to basic and acidic residues over residues 356–381 (GRRDGDRDRDRDSGWSSRRDAPDSRR) and 416–504 (SKRD…DRRR).

This sequence belongs to the cyclophilin-type PPIase family. PPIL4 subfamily.

The protein resides in the nucleus. It catalyses the reaction [protein]-peptidylproline (omega=180) = [protein]-peptidylproline (omega=0). PPIases accelerate the folding of proteins. It catalyzes the cis-trans isomerization of proline imidic peptide bonds in oligopeptides. The protein is Peptidyl-prolyl cis-trans isomerase-like 4 (CYP6) of Cryptococcus neoformans var. neoformans serotype D (strain B-3501A) (Filobasidiella neoformans).